The chain runs to 248 residues: Trihelix transcription factor ENAP2 (248 aa).

Positions 1–13 are enriched in polar residues; the sequence is METTTPQSKSSVS. Residues 1–20 are disordered; sequence METTTPQSKSSVSHRPPLGR. A DNA-binding region (MADF) is located at residues 24-113; it reads WSEEATATLV…RLDVLIGPVV (90 aa). A Nuclear localization signal motif is present at residues 69 to 76; sequence RKKTDLQC. The disordered stretch occupies residues 123–150; the sequence is SAPFKNHLNPTGSNSTGSSLEDDDEDDD. Residues 130-141 are compositionally biased toward polar residues; it reads LNPTGSNSTGSS. The stretch at 190–210 forms a coiled coil; it reads YERIEGKKQQMMIELEKQRME.

In terms of assembly, interacts with the Agrobacterium tumefaciens virulence protein F (VirF) in the nucleus. Binds to EIN2 C-terminal region in the presence of ethylene.

It is found in the nucleus. Its subcellular location is the nucleoplasm. Its function is as follows. Probable transcription regulator. Promotes histone acetylation during ethylene signaling in an EIN2-dependent manner, thus regulating positively ethylene-responsive genes. The chain is Trihelix transcription factor ENAP2 from Arabidopsis thaliana (Mouse-ear cress).